The chain runs to 188 residues: Auxin-induced protein 22C (188 aa).

Positions 13–17 match the EAR-like (transcriptional repression) motif; the sequence is LRLGL. The interval 16 to 57 is disordered; sequence GLPGAGGENNTDKDKNKNKKRVFSDIEGENSSSEEDGKKETK. A PB1 domain is found at 79–167; the sequence is KLYVKVSMDG…KRLRIMKRSD (89 aa).

This sequence belongs to the Aux/IAA family. As to quaternary structure, homodimers and heterodimers.

It is found in the nucleus. Aux/IAA proteins are short-lived transcriptional factors that function as repressors of early auxin response genes at low auxin concentrations. Repression is thought to result from the interaction with auxin response factors (ARFs), proteins that bind to the auxin-responsive promoter element (AuxRE). Formation of heterodimers with ARF proteins may alter their ability to modulate early auxin response genes expression. This chain is Auxin-induced protein 22C (AUX22C), found in Vigna radiata var. radiata (Mung bean).